A 507-amino-acid polypeptide reads, in one-letter code: Inositol-3-phosphate synthase (507 aa).

Residues G70, G71, N72, N73, D143, I180, Q190, R193, T230, A231, N232, T233, G281, S282, D306, S309, N340, N341, D342, K355, A391, D419, and S420 each coordinate NAD(+).

Belongs to the myo-inositol 1-phosphate synthase family. It depends on NAD(+) as a cofactor.

Its subcellular location is the cytoplasm. It localises to the cytosol. The protein localises to the nucleus. It carries out the reaction D-glucose 6-phosphate = 1D-myo-inositol 3-phosphate. It functions in the pathway polyol metabolism; myo-inositol biosynthesis; myo-inositol from D-glucose 6-phosphate: step 1/2. In terms of biological role, key enzyme in myo-inositol biosynthesis pathway that catalyzes the conversion of glucose 6-phosphate to 1-myo-inositol 1-phosphate in a NAD-dependent manner. The polypeptide is Inositol-3-phosphate synthase (Citrus paradisi (Grapefruit)).